A 201-amino-acid polypeptide reads, in one-letter code: Pyridoxal 5'-phosphate synthase subunit PdxT (201 aa).

49-51 (GES) is an L-glutamine binding site. Cys-81 (nucleophile) is an active-site residue. L-glutamine contacts are provided by residues Arg-110 and 139 to 140 (IR). Catalysis depends on charge relay system residues His-180 and Glu-182.

Belongs to the glutaminase PdxT/SNO family. In the presence of PdxS, forms a dodecamer of heterodimers. Only shows activity in the heterodimer.

It carries out the reaction aldehydo-D-ribose 5-phosphate + D-glyceraldehyde 3-phosphate + L-glutamine = pyridoxal 5'-phosphate + L-glutamate + phosphate + 3 H2O + H(+). The enzyme catalyses L-glutamine + H2O = L-glutamate + NH4(+). It functions in the pathway cofactor biosynthesis; pyridoxal 5'-phosphate biosynthesis. Its function is as follows. Catalyzes the hydrolysis of glutamine to glutamate and ammonia as part of the biosynthesis of pyridoxal 5'-phosphate. The resulting ammonia molecule is channeled to the active site of PdxS. In Salinispora tropica (strain ATCC BAA-916 / DSM 44818 / JCM 13857 / NBRC 105044 / CNB-440), this protein is Pyridoxal 5'-phosphate synthase subunit PdxT.